We begin with the raw amino-acid sequence, 417 residues long: uncharacterized protein (417 aa).

This is an uncharacterized protein from Sulfolobus islandicus rod-shaped virus 1 (SIRV-1).